A 424-amino-acid chain; its full sequence is Dual-specificity RNA methyltransferase RlmN (424 aa).

E132 acts as the Proton acceptor in catalysis. The region spanning 138 to 388 (GPDRGTLCVS…VRTPRGRDIL (251 aa)) is the Radical SAM core domain. Residues C145 and C391 are joined by a disulfide bond. The [4Fe-4S] cluster site is built by C152, C156, and C159. S-adenosyl-L-methionine-binding positions include 217–218 (GE), S249, 271–273 (SLH), and N348. The active-site S-methylcysteine intermediate is C391.

Belongs to the radical SAM superfamily. RlmN family. It depends on [4Fe-4S] cluster as a cofactor.

The protein localises to the cytoplasm. The enzyme catalyses adenosine(2503) in 23S rRNA + 2 reduced [2Fe-2S]-[ferredoxin] + 2 S-adenosyl-L-methionine = 2-methyladenosine(2503) in 23S rRNA + 5'-deoxyadenosine + L-methionine + 2 oxidized [2Fe-2S]-[ferredoxin] + S-adenosyl-L-homocysteine. It catalyses the reaction adenosine(37) in tRNA + 2 reduced [2Fe-2S]-[ferredoxin] + 2 S-adenosyl-L-methionine = 2-methyladenosine(37) in tRNA + 5'-deoxyadenosine + L-methionine + 2 oxidized [2Fe-2S]-[ferredoxin] + S-adenosyl-L-homocysteine. Specifically methylates position 2 of adenine 2503 in 23S rRNA and position 2 of adenine 37 in tRNAs. m2A2503 modification seems to play a crucial role in the proofreading step occurring at the peptidyl transferase center and thus would serve to optimize ribosomal fidelity. The protein is Dual-specificity RNA methyltransferase RlmN of Methylobacterium radiotolerans (strain ATCC 27329 / DSM 1819 / JCM 2831 / NBRC 15690 / NCIMB 10815 / 0-1).